Here is an 88-residue protein sequence, read N- to C-terminus: Putative sulfur carrier protein AF_0554 (88 aa).

The Cysteine persulfide intermediate role is filled by cysteine 26.

Belongs to the sulfur carrier protein TusA family.

The chain is Putative sulfur carrier protein AF_0554 from Archaeoglobus fulgidus (strain ATCC 49558 / DSM 4304 / JCM 9628 / NBRC 100126 / VC-16).